Consider the following 881-residue polypeptide: Valine--tRNA ligase (881 aa).

Residues 49–59 carry the 'HIGH' region motif; the sequence is PNVTGKLHLGH. The short motif at 526-530 is the 'KMSKS' region element; it reads KMSKS. ATP is bound at residue K529. Residues 810–881 adopt a coiled-coil conformation; that stretch reads LADLINLDEE…VRQRLADLEK (72 aa).

This sequence belongs to the class-I aminoacyl-tRNA synthetase family. ValS type 1 subfamily. As to quaternary structure, monomer.

Its subcellular location is the cytoplasm. It carries out the reaction tRNA(Val) + L-valine + ATP = L-valyl-tRNA(Val) + AMP + diphosphate. Its function is as follows. Catalyzes the attachment of valine to tRNA(Val). As ValRS can inadvertently accommodate and process structurally similar amino acids such as threonine, to avoid such errors, it has a 'posttransfer' editing activity that hydrolyzes mischarged Thr-tRNA(Val) in a tRNA-dependent manner. The polypeptide is Valine--tRNA ligase (Bacillus cereus (strain ATCC 14579 / DSM 31 / CCUG 7414 / JCM 2152 / NBRC 15305 / NCIMB 9373 / NCTC 2599 / NRRL B-3711)).